We begin with the raw amino-acid sequence, 253 residues long: Ribosomal RNA small subunit methyltransferase I (253 aa).

Residues Arg-230–Pro-246 show a composition bias toward basic and acidic residues. Residues Arg-230–Lys-253 are disordered.

It belongs to the methyltransferase superfamily. RsmI family.

The protein resides in the cytoplasm. It carries out the reaction cytidine(1402) in 16S rRNA + S-adenosyl-L-methionine = 2'-O-methylcytidine(1402) in 16S rRNA + S-adenosyl-L-homocysteine + H(+). Its function is as follows. Catalyzes the 2'-O-methylation of the ribose of cytidine 1402 (C1402) in 16S rRNA. The protein is Ribosomal RNA small subunit methyltransferase I of Leptospira borgpetersenii serovar Hardjo-bovis (strain L550).